The sequence spans 369 residues: MSETSLLPRAHGAAVLSAAMRSTPDDFQVDELPAFEPSGEGEHLLLTVCKRGQNTAYIAKKLAHWAGIAEMGVGYAGLKDRHAVTTQRFSVHLPKRIAPDIAALDDAQMQVIDSTWHNRKLQRGALHGNGFVLTLRQVHGERDAVEERLQAIAARGIPNWFGEQRFGRDGGNVAAALVMFGYVQAADGTLAPAPTSRRRLRNDQRSMLLSAARSALFNRVLTARVEQDSWDSALEGEAWMLDGSRSVFGPEPWSDALAERLACFDIHPSGPLWGAGALRSTDQAAAVEQGALSDPQSEALRQGLEAAGLKQERRALRLRPQGLDYRWLEAQTLQLEFALPPGCYATAVLWELGEVTDAGRFDAGVRSDE.

Residue aspartate 80 is the Nucleophile of the active site. A TRUD domain is found at 156 to 318 (GIPNWFGEQR…LKQERRALRL (163 aa)).

It belongs to the pseudouridine synthase TruD family.

The catalysed reaction is uridine(13) in tRNA = pseudouridine(13) in tRNA. Functionally, responsible for synthesis of pseudouridine from uracil-13 in transfer RNAs. This chain is tRNA pseudouridine synthase D, found in Xanthomonas oryzae pv. oryzae (strain KACC10331 / KXO85).